Consider the following 805-residue polypeptide: MLISKKTLAVLIPEITHVSNNEICEKLQQIGIEVEAIRAFKNPDYLQLGILRAVTPHPHDNHLYVCQVQIDKNKQLNVVTGAVNIVDPNNLNKHVIVAKKGAELLNGLIIKTKNIKGIISDGMLCSYVDINPFSKHLIADGDDTHAIVLDNINRDEFGDYLSFLNLDDVVFEVTLPTNRSDLQSLIFLAKELAAVLKRPVFLEQKTTMTLREFYRFPLNLRNRAQANFFGGLFLRDVAITSSPWTTKGLLINQELRPVNCFVDQANMVTVYTGQPIHCHDADKIHGSVELKLATQLETMLALDNKEYEIKPGDLVVADEQGTIAIVGIIGSKRTMVDNTTNNIFFEVVNYNHERIKQTAQRLGVANFASRLMSKPISLQATENCLNYLQNNFLNPESIGKISKFSSTIKAPAFNRKIYLNFNQLRELIGVTKKQLNDHMIRNYLTSLGFKMENQIARAPAYRQDITVWQDISEELLKILDLNKIKEDEILSSTKLEKHEKLNAYDALQKLRTKLQTLGFHNVITYQLISPERARNFNLFGLSNLWEIKNPLSNERSVLRVGLIDSLLRVIQKNAAYKNKLGNIFEFSFVKTKDSNQLHIAALWLEKMFGSTYQKDQGVSVDIPAMKGLAQLIISNFGFNCDFEPITEGEYFTKNVGLKLVVFNEQIGYVGLIKDELLAPYDLKGRPVYGLEINLDRLLNSLNRLERSYTPISKLQDVFKDITFSFPRDESHFETFVKAIKKLQTIFKWELISVFDTEKDGVPITKYTVRYYLKNFTNTPLTLEQIKAVETQLKQQCELAKIALDL.

A tRNA-binding domain is found at 40–162 (FKNPDYLQLG…NRDEFGDYLS (123 aa)). Residues 412 to 486 (AFNRKIYLNF…KILDLNKIKE (75 aa)) enclose the B5 domain. Residues D464, D470, E473, and E474 each contribute to the Mg(2+) site.

This sequence belongs to the phenylalanyl-tRNA synthetase beta subunit family. Type 1 subfamily. As to quaternary structure, tetramer of two alpha and two beta subunits. Requires Mg(2+) as cofactor.

The protein resides in the cytoplasm. The enzyme catalyses tRNA(Phe) + L-phenylalanine + ATP = L-phenylalanyl-tRNA(Phe) + AMP + diphosphate + H(+). The protein is Phenylalanine--tRNA ligase beta subunit (pheT) of Mycoplasma pneumoniae (strain ATCC 29342 / M129 / Subtype 1) (Mycoplasmoides pneumoniae).